A 345-amino-acid polypeptide reads, in one-letter code: Heat-inducible transcription repressor HrcA (345 aa).

The protein belongs to the HrcA family.

Negative regulator of class I heat shock genes (grpE-dnaK-dnaJ and groELS operons). Prevents heat-shock induction of these operons. In Zymomonas mobilis subsp. mobilis (strain ATCC 31821 / ZM4 / CP4), this protein is Heat-inducible transcription repressor HrcA.